Here is a 422-residue protein sequence, read N- to C-terminus: MDQIVIRGGVPLHGAIPIAGAKNACLTLMPATLLSDEPLTLTNAPRLSDIATMTALLRSLGAEVSTLQDGKVLALSSHRIDNHTAEYDIVRKMRASILVLGPMLARDGHAVVSLPGGCAIGARPVDLHLKGLEALGADLTLTDGYVHAKAPGGLKGAVFEFPFVSVGATENILMAATLAKGTTVLKNAAREPEIVDLARCLRKMGAQIEGEGTSRITVQGVDRLHGATHPVVTDRIELGTYMLAPAITGGEVELIGGRLDLVAAFAERLAAAGVDVSETAHGLTVKRANGRVGAVDVVTEPFPGFPTDLQAQMMALLCTADGVSVLEERIFENRFMHAPELIRMGARIDVHGGTATVTGVPQLKGAPVMATDLRASVSLILAALAAEGETVVSRVYHLDRGYERVEEKLSACGAQIERVKET.

Residue 22 to 23 participates in phosphoenolpyruvate binding; that stretch reads KN. R94 serves as a coordination point for UDP-N-acetyl-alpha-D-glucosamine. C118 (proton donor) is an active-site residue. Residue C118 is modified to 2-(S-cysteinyl)pyruvic acid O-phosphothioketal. UDP-N-acetyl-alpha-D-glucosamine contacts are provided by residues 123–127, D308, and I330; that span reads RPVDL.

This sequence belongs to the EPSP synthase family. MurA subfamily.

Its subcellular location is the cytoplasm. The catalysed reaction is phosphoenolpyruvate + UDP-N-acetyl-alpha-D-glucosamine = UDP-N-acetyl-3-O-(1-carboxyvinyl)-alpha-D-glucosamine + phosphate. It functions in the pathway cell wall biogenesis; peptidoglycan biosynthesis. Its function is as follows. Cell wall formation. Adds enolpyruvyl to UDP-N-acetylglucosamine. The chain is UDP-N-acetylglucosamine 1-carboxyvinyltransferase from Dinoroseobacter shibae (strain DSM 16493 / NCIMB 14021 / DFL 12).